The following is a 742-amino-acid chain: Protein-associating with the carboxyl-terminal domain of ezrin (742 aa).

Gly-2 is lipidated: N-myristoyl glycine. Residues 2–245 form the Protein kinase domain; sequence GSENSALKSY…LCTLLSHDFF (244 aa). HEAT repeat units follow at residues 199–238, 285–323, 333–370, and 372–409; these read ESLL…ALCT, LIAS…HAQG, LFQS…HFTQ, and QLKK…LLGP. Residue Ser-439 is modified to Phosphoserine. Disordered stretches follow at residues 506–544, 568–598, and 629–652; these read LSDV…QTVN, SSWD…TSGE, and GDDA…VPSE. The span at 529–539 shows a compositional bias: acidic residues; it reads WPDWSEPEEPE. The interval 548–742 is interaction with EZR; that stretch reads WPREPCDDVK…GELNWEDNNW (195 aa). Ser-707 is modified (phosphoserine). The interval 723 to 742 is disordered; it reads EGEAEGWEEEGELNWEDNNW.

It belongs to the protein kinase superfamily. Interacts with EZR/VIL2 C-terminal domain. In terms of processing, may be myristoylated; myristoylation may target it to Golgi compartment. Post-translationally, phosphorylated. As to expression, ubiquitously expressed.

It localises to the cytoplasm. It is found in the golgi apparatus. Its subcellular location is the cell projection. The protein resides in the lamellipodium. In terms of biological role, may play a role in regulating cell adhesion/migration complexes in migrating cells. This Homo sapiens (Human) protein is Protein-associating with the carboxyl-terminal domain of ezrin (SCYL3).